The sequence spans 458 residues: Sphingoid long chain base kinase 4 (458 aa).

The 139-residue stretch at 103-241 folds into the DAGKc domain; that stretch reads KRSRRFIVFI…FDLMTFEQKG (139 aa). ATP-binding positions include 113–115 and Thr-145; that span reads NPH. Residue 170–173 coordinates substrate; it reads GGDG. The Proton donor/acceptor role is filled by Asp-172. Residues Glu-177, 202-204, Arg-266, Arg-272, and 426-428 each bind ATP; these read GSG and DGE.

Its subcellular location is the cell membrane. The protein resides in the endoplasmic reticulum membrane. It is found in the late endosome membrane. The protein localises to the golgi apparatus membrane. The catalysed reaction is a sphingoid base + ATP = a sphingoid 1-phosphate + ADP + H(+). In terms of biological role, catalyzes the phosphorylation of the sphingoid long chain bases dihydrosphingosine (DHS) and phytosphingosine (PHS) to form dihydrosphingosine 1-phosphate (DHS-1P) and phytosphingosine 1-phosphate (PHS-1P) respectively. Involved in the biosynthesis of sphingolipids and ceramides. Involved in heat-induced transient cell cycle arrest. Accumulation of phosphorylated sphingoid long chain bases (LCBPs) stimulates calcium influx and activates calcineurin signaling. Involved in heat-stress resistance. The protein is Sphingoid long chain base kinase 4 (lcb4) of Schizosaccharomyces pombe (strain 972 / ATCC 24843) (Fission yeast).